Here is a 521-residue protein sequence, read N- to C-terminus: MIESGIWSRMSEMIRSSGHSHHCSPQEYRFLPPVGDDDLPGDLQSLSWLTAVDVPRLQQMANGRIDLGSSGVTHPHPGALAGTADLHVGAAPRPLLRRSQTAVVPRGVLGLSPIGNHRASAEQMNQFPAGGQASSGLQEMPQLYSPATQIPFPLPLGSQQCPPAGLYGSPFSARPSYPQAHGAMHASQEPHPKHYPKPIYSYSCLIAMALKNSKTGSLPVSEIYSFMKEHFPYFKTAPDGWKNSVRHNLSLNKCFEKVETKSSGSSRKGCLWALNLARIDKMEEEMHKWKRKDLAAIHRSMANPEELDKLISDRPESCRRPGKRGEPKAPMLTHATTVAMAHSCLAISQLPPKPLMTLSLQSVPLHHQLQPQAHLAPDSPAPAQTPPLHALPSLSPGPLPQPAMGRVPGDFLNINSDMNTEVDALDPSIMDFALQGNLWEEMKEDSFSLDTLEAFGDSPLGCDLGAPSLTPVSGNSDQSFPDVQVTGLYAAYSTAADGVAPSAANSAQYLGTPGNKPIALL.

The fork-head DNA-binding region spans 197–293 (KPIYSYSCLI…EEMHKWKRKD (97 aa)). The tract at residues 371–406 (PQAHLAPDSPAPAQTPPLHALPSLSPGPLPQPAMGR) is disordered.

As to expression, mainly expressed in proliferator progenitor cells in brain and retina rather than differentiated cells. In contrast, is expressed only in postmitotic epithelial cells rather than in proliferative progenitors in the proximal airway.

Its subcellular location is the nucleus. In terms of biological role, transcription factor essential for neural and some non-neural tissues development, such as retina and lung respectively. Binds to an 11-bp consensus sequence containing the invariant tetranucleotide 5'-ACGC-3'. During development of the central nervous system, is required to specify the amacrine and horizontal cell fates from multipotent retinal progenitors while suppressing the alternative photoreceptor cell fates through activating DLL4-NOTCH signaling. Also acts synergistically with ASCL1/MASH1 to activate DLL4-NOTCH signaling and drive commitment of p2 progenitors to the V2b interneuron fates during spinal cord neurogenesis. In development of non-neural tissues, plays an essential role in the specification of the atrioventricular canal and is indirectly required for patterning the distal airway during lung development. The protein is Forkhead box protein N4 (Foxn4) of Mus musculus (Mouse).